The chain runs to 371 residues: Heterodimeric geranylgeranyl pyrophosphate synthase large subunit 1, chloroplastic (371 aa).

Residues 1–51 (MASVTLGSWIVVHHHNHHHPSSILTKSRSRSCPITLTKPISFRSKRTVSSS) constitute a chloroplast transit peptide. Serine 52 is modified (N-acetylserine). Residues lysine 116, arginine 119, and histidine 148 each coordinate isopentenyl diphosphate. Mg(2+)-binding residues include aspartate 155 and aspartate 161. Dimethylallyl diphosphate is bound at residue arginine 166. Arginine 167 contributes to the isopentenyl diphosphate binding site. Dimethylallyl diphosphate-binding residues include lysine 256, threonine 257, glutamine 294, lysine 311, and lysine 321.

It belongs to the FPP/GGPP synthase family. Forms homodimers. Part of a heterodimeric geranyl(geranyl)diphosphate synthase. Interacts with GGR. It depends on Mg(2+) as a cofactor. In terms of tissue distribution, expressed ubiquitously.

Its subcellular location is the plastid. It localises to the chloroplast. It is found in the cytoplasm. It catalyses the reaction isopentenyl diphosphate + dimethylallyl diphosphate = (2E)-geranyl diphosphate + diphosphate. It carries out the reaction isopentenyl diphosphate + (2E)-geranyl diphosphate = (2E,6E)-farnesyl diphosphate + diphosphate. The enzyme catalyses isopentenyl diphosphate + (2E,6E)-farnesyl diphosphate = (2E,6E,10E)-geranylgeranyl diphosphate + diphosphate. It functions in the pathway isoprenoid biosynthesis; farnesyl diphosphate biosynthesis; farnesyl diphosphate from geranyl diphosphate and isopentenyl diphosphate: step 1/1. It participates in isoprenoid biosynthesis; geranyl diphosphate biosynthesis; geranyl diphosphate from dimethylallyl diphosphate and isopentenyl diphosphate: step 1/1. The protein operates within isoprenoid biosynthesis; geranylgeranyl diphosphate biosynthesis; geranylgeranyl diphosphate from farnesyl diphosphate and isopentenyl diphosphate: step 1/1. Heterodimeric geranyl(geranyl)-diphosphate (GPP) synthase large subunit. In vitro, the large subunit catalyzes mainly the trans-addition of the three molecules of IPP onto DMAPP to form geranylgeranyl pyrophosphate while the small subunit alone is inactive. Upon association of the two subunits, the product profile changes and the production of gerany-diphosphate is strongly increased. The chain is Heterodimeric geranylgeranyl pyrophosphate synthase large subunit 1, chloroplastic (GGPPS1) from Arabidopsis thaliana (Mouse-ear cress).